The chain runs to 278 residues: 2-dehydro-3-deoxyphosphooctonate aldolase (278 aa).

The protein belongs to the KdsA family.

Its subcellular location is the cytoplasm. The catalysed reaction is D-arabinose 5-phosphate + phosphoenolpyruvate + H2O = 3-deoxy-alpha-D-manno-2-octulosonate-8-phosphate + phosphate. The protein operates within carbohydrate biosynthesis; 3-deoxy-D-manno-octulosonate biosynthesis; 3-deoxy-D-manno-octulosonate from D-ribulose 5-phosphate: step 2/3. It functions in the pathway bacterial outer membrane biogenesis; lipopolysaccharide biosynthesis. This is 2-dehydro-3-deoxyphosphooctonate aldolase from Bartonella quintana (strain Toulouse) (Rochalimaea quintana).